Reading from the N-terminus, the 463-residue chain is Asparagine--tRNA ligase (463 aa).

It belongs to the class-II aminoacyl-tRNA synthetase family. As to quaternary structure, homodimer.

The protein localises to the cytoplasm. It carries out the reaction tRNA(Asn) + L-asparagine + ATP = L-asparaginyl-tRNA(Asn) + AMP + diphosphate + H(+). In Acholeplasma laidlawii (strain PG-8A), this protein is Asparagine--tRNA ligase.